A 320-amino-acid chain; its full sequence is Olfactory receptor 2AT4 (320 aa).

Topologically, residues 1–31 (MDATACNESVDGSPVFYLLGIPSLPETFFLP) are extracellular. A glycan (N-linked (GlcNAc...) asparagine) is linked at asparagine 7. Residues 32–52 (VFFIFLLFYLLILMGNALILV) form a helical membrane-spanning segment. Residues 53–62 (AVVAEPSLHK) lie on the Cytoplasmic side of the membrane. Residues 63-83 (PMYFFLINLSTLDILFTTTTV) form a helical membrane-spanning segment. The Extracellular portion of the chain corresponds to 84–102 (PKMLSLFLLGDRFLSFSSC). Cysteine 102 and cysteine 184 form a disulfide bridge. A helical transmembrane segment spans residues 103–123 (LLQMYLFQSFTCSEAFILVVM). Residues 124–145 (AYDRYVAICHPLHYPVLMNPQT) lie on the Cytoplasmic side of the membrane. The chain crosses the membrane as a helical span at residues 146–166 (NATLAASAWLTALLLPIPAVV). Residues 167–200 (RTSQMAYNSIAYIYHCFCDHLAVVQASCSDTTPQ) lie on the Extracellular side of the membrane. A helical transmembrane segment spans residues 201 to 221 (TLMGFCIAMVVSFLPLLLVLL). Residues 222–245 (SYVHILASVLRISSLEGRAKAFST) lie on the Cytoplasmic side of the membrane. Residues 246–266 (CSSHLLVVGTYYSSIAIAYVA) form a helical membrane-spanning segment. At 267–276 (YRADLPLDFH) the chain is on the extracellular side. A helical membrane pass occupies residues 277-297 (IMGNVVYAILTPILNPLIYTL). Residues 298–320 (RNRDVKAAITKIMSQDPGCDRSI) lie on the Cytoplasmic side of the membrane.

It belongs to the G-protein coupled receptor 1 family. As to expression, detected in the keratinocytes of the epidermis (at protein level). Detected in hair follicles in proximal outer root sheath and hair matrix keratinocytes (at protein level).

The protein resides in the cell membrane. Its function is as follows. Olfactory receptor. Activated by the synthetic sandalwood odorant sandalore. Endogenous ligand is unknown. The activity of this receptor is probably mediated by G proteins which induce elevation of intracellular Ca(2+), a cAMP-dependent pathway and phosphorylation of MAPK1/ERK2, MAPK3/ERK1 and p38 MAPKs. Activation of OR2AT4 induces proliferation, migration, and re-epithelialization during wound-healing processes of keratinocytes. Stimulation of OR2AT4 by sandalore promotes hair growth by decreasing apoptosis and increasing production of the anagen-prolonging growth factor IGF1 as well as other pathways involving various kinases. This Homo sapiens (Human) protein is Olfactory receptor 2AT4.